The sequence spans 471 residues: Extracellular endo-alpha-(1-&gt;5)-L-arabinanase (471 aa).

A signal peptide spans methionine 1–alanine 19. Aspartate 32 serves as the catalytic Proton acceptor. Residues aspartate 32, glycine 117, asparagine 167–aspartate 170, serine 187–phenylalanine 189, and histidine 219–glutamate 223 contribute to the substrate site. The active-site Proton donor is the glutamate 223. Histidine 314 provides a ligand contact to Ca(2+).

This sequence belongs to the glycosyl hydrolase 43 family. As to quaternary structure, monomer. The cofactor is Ca(2+).

The protein localises to the secreted. It catalyses the reaction Endohydrolysis of (1-&gt;5)-alpha-arabinofuranosidic linkages in (1-&gt;5)-arabinans.. The protein operates within glycan metabolism; L-arabinan degradation. In terms of biological role, involved in the degradation of arabinan and is a key enzyme in the complete degradation of the plant cell wall. Catalyzes the internal cleavage of alpha-(1-&gt;5)-L-arabinofuranosyl residues in different arabinan-containing polysaccharides, and releases arabinotriose and arabinobiose as end products. It acts on branched arabinan (from sugar beet), but more slowly when compared to linear or debranched arabinan. This chain is Extracellular endo-alpha-(1-&gt;5)-L-arabinanase, found in Thermotoga petrophila (strain ATCC BAA-488 / DSM 13995 / JCM 10881 / RKU-1).